The sequence spans 636 residues: Biosynthetic arginine decarboxylase (636 aa).

The residue at position 110 (K110) is an N6-(pyridoxal phosphate)lysine. Residue 290-300 participates in substrate binding; that stretch reads IDVGGGLGVDY.

It belongs to the Orn/Lys/Arg decarboxylase class-II family. SpeA subfamily. The cofactor is Mg(2+). Requires pyridoxal 5'-phosphate as cofactor.

It catalyses the reaction L-arginine + H(+) = agmatine + CO2. Its function is as follows. Catalyzes the biosynthesis of agmatine from arginine. The sequence is that of Biosynthetic arginine decarboxylase from Pseudomonas aeruginosa (strain ATCC 15692 / DSM 22644 / CIP 104116 / JCM 14847 / LMG 12228 / 1C / PRS 101 / PAO1).